We begin with the raw amino-acid sequence, 99 residues long: UPF0729 protein CG18508 (99 aa).

The tract at residues 60–99 (PGGKKTENVSDDDAEESENPPLNATAMAAETEVDESKKEI) is disordered. Positions 68–77 (VSDDDAEESE) are enriched in acidic residues. Phosphoserine is present on Ser69.

The protein belongs to the UPF0729 family.

In Drosophila melanogaster (Fruit fly), this protein is UPF0729 protein CG18508.